Here is a 210-residue protein sequence, read N- to C-terminus: Orotate phosphoribosyltransferase (210 aa).

5-phospho-alpha-D-ribose 1-diphosphate-binding positions include arginine 96, lysine 100, histidine 102, and 122–130 (EDLISTGGS). Serine 126 contacts orotate.

The protein belongs to the purine/pyrimidine phosphoribosyltransferase family. PyrE subfamily. Homodimer. It depends on Mg(2+) as a cofactor.

It catalyses the reaction orotidine 5'-phosphate + diphosphate = orotate + 5-phospho-alpha-D-ribose 1-diphosphate. The protein operates within pyrimidine metabolism; UMP biosynthesis via de novo pathway; UMP from orotate: step 1/2. In terms of biological role, catalyzes the transfer of a ribosyl phosphate group from 5-phosphoribose 1-diphosphate to orotate, leading to the formation of orotidine monophosphate (OMP). The sequence is that of Orotate phosphoribosyltransferase from Streptococcus pneumoniae serotype 4 (strain ATCC BAA-334 / TIGR4).